The primary structure comprises 171 residues: Dual-action ribosomal maturation protein DarP (171 aa).

The interval 1–30 is disordered; the sequence is MPKRPAENPEQSDDFVSKSQKKREMAERQE.

Belongs to the DarP family.

The protein localises to the cytoplasm. In terms of biological role, member of a network of 50S ribosomal subunit biogenesis factors which assembles along the 30S-50S interface, preventing incorrect 23S rRNA structures from forming. Promotes peptidyl transferase center (PTC) maturation. The polypeptide is Dual-action ribosomal maturation protein DarP (Idiomarina loihiensis (strain ATCC BAA-735 / DSM 15497 / L2-TR)).